Consider the following 29-residue polypeptide: Scolopendra 8011.73 Da toxin (29 aa).

As to expression, expressed by the venom gland.

It is found in the secreted. The polypeptide is Scolopendra 8011.73 Da toxin (Scolopendra viridicornis nigra (Brazilian giant centipede)).